Here is a 404-residue protein sequence, read N- to C-terminus: G-protein coupled receptor 143 (404 aa).

The Extracellular portion of the chain corresponds to 1–28; that stretch reads MASPRLGTFCCPTRDAATQLVLSFQPRA. Residues 29-49 form a helical membrane-spanning segment; sequence FHALCLGSGGLRLALGLLQLL. Residues 50-78 lie on the Cytoplasmic side of the membrane; sequence PGRRPAGPGSPATSPPASVRILRAAAACD. Residues 79–99 traverse the membrane as a helical segment; sequence LLGCLGMVIRSTVWLGFPNFV. Over 100–124 the chain is Extracellular; sequence DSVSDMNHTEIWPAAFCVGSAMWIQ. Asparagine 106 carries an N-linked (GlcNAc...) asparagine glycan. The chain crosses the membrane as a helical span at residues 125–145; sequence LLYSACFWWLFCYAVDAYLVI. The Cytoplasmic portion of the chain corresponds to 146–149; that stretch reads RRSA. A helical transmembrane segment spans residues 150–170; it reads GLSTILLYHIMAWGLATLLCV. Residues 171–191 lie on the Extracellular side of the membrane; that stretch reads EGAAMLYYPSVSRCERGLDHA. Residues 192 to 212 traverse the membrane as a helical segment; it reads IPHYVTMYLPLLLVLVANPIL. Over 213–248 the chain is Cytoplasmic; that stretch reads FQKTVTAVASLLKGRQGIYTENERRMGAVIKIRFFK. The interval 221-238 is necessary for its G protein-activation ability and normal distribution of melanosomes; sequence ASLLKGRQGIYTENERRM. A lysosomal/melanosomal membrane localization signal motif is present at residues 222-231; it reads SLLKGRQGIY. A helical transmembrane segment spans residues 249-269; it reads IMLVLIICWLSNIINESLLFY. Residues 270–292 are Extracellular-facing; it reads LEMQTDINGGSLKPVRTAAKTTW. The chain crosses the membrane as a helical span at residues 293–313; sequence FIMGILNPAQGFLLSLAFYGW. The Cytoplasmic segment spans residues 314 to 404; that stretch reads TGCSLGFQSP…DPALPTHGDL (91 aa). The lysosomal/melanosomal membrane localization signal motif lies at 329-330; the sequence is WE. Residues 338–404 are disordered; the sequence is EGAHPSPLMP…DPALPTHGDL (67 aa). Positions 355–366 are enriched in polar residues; sequence KVSQVGGQTSDE.

It belongs to the G-protein coupled receptor OA family. In terms of assembly, interacts with heterotrimeric G(i) proteins. Interacts with ARRB1 and ARRB2. Interacts with MLANA. Post-translationally, glycosylated. Phosphorylated. As to expression, expressed at high levels in the retina, including the retinal pigment epithelium (RPE), and in melanocytes. Weak expression is observed in brain and adrenal gland.

It localises to the melanosome membrane. Its subcellular location is the lysosome membrane. The protein localises to the apical cell membrane. Functionally, receptor for tyrosine, L-DOPA and dopamine. After binding to L-DOPA, stimulates Ca(2+) influx into the cytoplasm, increases secretion of the neurotrophic factor SERPINF1 and relocalizes beta arrestin at the plasma membrane; this ligand-dependent signaling occurs through a G(q)-mediated pathway in melanocytic cells. Its activity is mediated by G proteins which activate the phosphoinositide signaling pathway. Also plays a role as an intracellular G protein-coupled receptor involved in melanosome biogenesis, organization and transport. The protein is G-protein coupled receptor 143 (GPR143) of Homo sapiens (Human).